The sequence spans 352 residues: Heavy metal-associated isoprenylated plant protein 36 (352 aa).

One can recognise an HMA domain in the interval 29–92; the sequence is YTTWVLRVSI…KIMKAGRHAE (64 aa). A metal cation-binding residues include cysteine 40 and cysteine 43. Disordered stretches follow at residues 96-150, 162-211, and 229-252; these read TSME…GNFD, QLQP…GPPE, and PHLH…RHHP. The segment covering 97–107 has biased composition (polar residues); sequence SMENNINNDCN. A compositionally biased stretch (acidic residues) spans 118–128; sequence ETSGDEDDDEN. Residues 133–148 are compositionally biased toward gly residues; the sequence is NGGGDVGGGGGGGGGN. Over residues 172–183 the composition is skewed to basic residues; it reads KKKKKKKKKKKS. Gly residues predominate over residues 192–203; sequence EGGGGGGGGGGP. Cysteine 349 is subject to Cysteine methyl ester. A lipid anchor (S-farnesyl cysteine) is attached at cysteine 349. The propeptide at 350 to 352 is removed in mature form; it reads CVM.

The protein belongs to the HIPP family.

Its function is as follows. Heavy-metal-binding protein. In Arabidopsis thaliana (Mouse-ear cress), this protein is Heavy metal-associated isoprenylated plant protein 36.